We begin with the raw amino-acid sequence, 563 residues long: O-fucosyltransferase 14 (563 aa).

The span at 1–16 shows a compositional bias: low complexity; it reads MVKVSSSTTSSSSSSS. The segment at 1–25 is disordered; the sequence is MVKVSSSTTSSSSSSSPDEESDLQN. The helical; Signal-anchor for type II membrane protein transmembrane segment at 73 to 93 threads the bilayer; the sequence is IFIFLPIVIILIYLSTDFSNY. N-linked (GlcNAc...) asparagine glycosylation is found at Asn135, Asn140, and Asn339. Residues 412-414 and 528-529 each bind substrate; these read HFR and TF.

This sequence belongs to the glycosyltransferase GT106 family.

The protein resides in the membrane. It functions in the pathway glycan metabolism. This is O-fucosyltransferase 14 from Arabidopsis thaliana (Mouse-ear cress).